The primary structure comprises 751 residues: Valine--tRNA ligase (751 aa).

Lysine 520 serves as a coordination point for ATP.

This sequence belongs to the class-I aminoacyl-tRNA synthetase family. ValS type 2 subfamily.

It localises to the cytoplasm. The enzyme catalyses tRNA(Val) + L-valine + ATP = L-valyl-tRNA(Val) + AMP + diphosphate. Its function is as follows. Catalyzes the attachment of valine to tRNA(Val). As ValRS can inadvertently accommodate and process structurally similar amino acids such as threonine, to avoid such errors, it has a 'posttransfer' editing activity that hydrolyzes mischarged Thr-tRNA(Val) in a tRNA-dependent manner. This is Valine--tRNA ligase (valS) from Nanoarchaeum equitans (strain Kin4-M).